The following is a 324-amino-acid chain: dITP/XTP pyrophosphatase (324 aa).

Residues 1 to 126 (MTKSIFEYKD…SDNKSDFGDV (126 aa)) form a unknown region. The interval 127–324 (LLIATRNEGK…EVFPAWQNKQ (198 aa)) is NTP pyrophosphatase. 131-136 (TRNEGK) serves as a coordination point for substrate. The active-site Proton acceptor is the D193. Position 193 (D193) interacts with Mg(2+). Substrate-binding positions include S194, 277 to 280 (FGYD), K300, and 305 to 306 (HR).

The protein belongs to the HAM1 NTPase family. In terms of assembly, homodimer. Requires Mg(2+) as cofactor.

It carries out the reaction XTP + H2O = XMP + diphosphate + H(+). The catalysed reaction is dITP + H2O = dIMP + diphosphate + H(+). The enzyme catalyses ITP + H2O = IMP + diphosphate + H(+). Functionally, pyrophosphatase that catalyzes the hydrolysis of nucleoside triphosphates to their monophosphate derivatives, with a high preference for the non-canonical purine nucleotides XTP (xanthosine triphosphate), dITP (deoxyinosine triphosphate) and ITP. Seems to function as a house-cleaning enzyme that removes non-canonical purine nucleotides from the nucleotide pool, thus preventing their incorporation into DNA/RNA and avoiding chromosomal lesions. The chain is dITP/XTP pyrophosphatase from Streptococcus thermophilus (strain CNRZ 1066).